The chain runs to 691 residues: Calcium-binding and coiled-coil domain-containing protein 1 (691 aa).

The tract at residues 1-30 (MEESSLSRAPSRGGVNFLNVARTYIPNTKV) is p300 KIX-binding. The N-terminal AD (CTNNB1 binding site) stretch occupies residues 1 to 190 (MEESSLSRAP…VQELEAALAT (190 aa)). S4 carries the phosphoserine modification. An interaction with GATA1 region spans residues 45–125 (SDWIGIFKVE…FQFREPRPMD (81 aa)). 3 coiled-coil regions span residues 145-205 (KATV…YKGL), 232-339 (ELED…AELE), and 417-514 (QSME…ADEK). Positions 501 to 691 (RKLEARLEKV…FSTQDPFTFE (191 aa)) are C-terminal AD (CTNNB1 binding site); interaction with CCAR1. The tract at residues 512-605 (DEKWTEDAAT…DSEAEDEKSV (94 aa)) is disordered. The UBZ1-type zinc finger occupies 653–679 (WKECPICKERFPAESDKDALEGHMDGH). Positions 656, 659, 675, and 679 each coordinate Zn(2+).

It belongs to the CALCOCO family. Part of a calphoglin complex consisting of CALCOCO1, PPA1 and PGM. Interacts with the bHLH-PAS domains of GRIP1, AHR and ARNT. Interacts with CTNNB1 via both its N- and C-terminal regions. Interacts with EP300. Interacts with CCAR1 (via N-terminus) and GATA1. As to expression, expressed in all tissues examined except spleen, with high levels of expression in the heart and kidney.

The protein localises to the cytoplasm. It localises to the nucleus. Functions as a coactivator for aryl hydrocarbon and nuclear receptors (NR). Recruited to promoters through its contact with the N-terminal basic helix-loop-helix-Per-Arnt-Sim (PAS) domain of transcription factors or coactivators, such as NCOA2. During ER-activation acts synergistically in combination with other NCOA2-binding proteins, such as EP300, CREBBP and CARM1. Involved in the transcriptional activation of target genes in the Wnt/CTNNB1 pathway. Functions as a secondary coactivator in LEF1-mediated transcriptional activation via its interaction with CTNNB1. Coactivator function for nuclear receptors and LEF1/CTNNB1 involves differential utilization of two different activation regions. In association with CCAR1 enhances GATA1- and MED1-mediated transcriptional activation from the gamma-globin promoter during erythroid differentiation of K562 erythroleukemia cells. This Mus musculus (Mouse) protein is Calcium-binding and coiled-coil domain-containing protein 1 (Calcoco1).